The following is a 280-amino-acid chain: Phosphatidylserine decarboxylase proenzyme (280 aa).

Active-site charge relay system; for autoendoproteolytic cleavage activity residues include D88, H144, and S247. S247 functions as the Schiff-base intermediate with substrate; via pyruvic acid; for decarboxylase activity in the catalytic mechanism. S247 carries the pyruvic acid (Ser); by autocatalysis modification.

The protein belongs to the phosphatidylserine decarboxylase family. PSD-B subfamily. Prokaryotic type I sub-subfamily. As to quaternary structure, heterodimer of a large membrane-associated beta subunit and a small pyruvoyl-containing alpha subunit. Pyruvate serves as cofactor. Post-translationally, is synthesized initially as an inactive proenzyme. Formation of the active enzyme involves a self-maturation process in which the active site pyruvoyl group is generated from an internal serine residue via an autocatalytic post-translational modification. Two non-identical subunits are generated from the proenzyme in this reaction, and the pyruvate is formed at the N-terminus of the alpha chain, which is derived from the carboxyl end of the proenzyme. The autoendoproteolytic cleavage occurs by a canonical serine protease mechanism, in which the side chain hydroxyl group of the serine supplies its oxygen atom to form the C-terminus of the beta chain, while the remainder of the serine residue undergoes an oxidative deamination to produce ammonia and the pyruvoyl prosthetic group on the alpha chain. During this reaction, the Ser that is part of the protease active site of the proenzyme becomes the pyruvoyl prosthetic group, which constitutes an essential element of the active site of the mature decarboxylase.

It localises to the cell membrane. It catalyses the reaction a 1,2-diacyl-sn-glycero-3-phospho-L-serine + H(+) = a 1,2-diacyl-sn-glycero-3-phosphoethanolamine + CO2. Its pathway is phospholipid metabolism; phosphatidylethanolamine biosynthesis; phosphatidylethanolamine from CDP-diacylglycerol: step 2/2. In terms of biological role, catalyzes the formation of phosphatidylethanolamine (PtdEtn) from phosphatidylserine (PtdSer). This chain is Phosphatidylserine decarboxylase proenzyme, found in Xanthomonas euvesicatoria pv. vesicatoria (strain 85-10) (Xanthomonas campestris pv. vesicatoria).